The chain runs to 1590 residues: Pentafunctional AROM polypeptide (1590 aa).

Residues 1–387 (MGSTTFENPT…YEPKASVVED (387 aa)) are 3-dehydroquinate synthase. NAD(+) is bound by residues 49–51 (DTN), 86–89 (ENSK), 117–119 (GGV), and D122. A 7-phospho-2-dehydro-3-deoxy-D-arabino-heptonate-binding site is contributed by R133. 142 to 143 (TT) contacts NAD(+). D149 and K155 together coordinate 7-phospho-2-dehydro-3-deoxy-D-arabino-heptonate. K164 is a binding site for NAD(+). N165 is a binding site for 7-phospho-2-dehydro-3-deoxy-D-arabino-heptonate. NAD(+)-binding positions include 182-185 (FLET) and N193. E197 serves as a coordination point for Zn(2+). 7-phospho-2-dehydro-3-deoxy-D-arabino-heptonate-binding positions include 197 to 200 (EVVK) and K253. The Proton acceptor; for 3-dehydroquinate synthase activity role is filled by E263. Residues 267-271 (RNILN) and H274 contribute to the 7-phospho-2-dehydro-3-deoxy-D-arabino-heptonate site. A Zn(2+)-binding site is contributed by H274. H278 functions as the Proton acceptor; for 3-dehydroquinate synthase activity in the catalytic mechanism. H290 and K359 together coordinate 7-phospho-2-dehydro-3-deoxy-D-arabino-heptonate. H290 provides a ligand contact to Zn(2+). Positions 400-841 (VRPSVPETLN…WDILSKSFQV (442 aa)) are EPSP synthase. C823 acts as the For EPSP synthase activity in catalysis. The tract at residues 863 to 1055 (DKSIFIIGMR…RNKPQSFFVS (193 aa)) is shikimate kinase. Residue 870 to 877 (GMRGAGKT) coordinates ATP. The tract at residues 1056–1276 (LTMPDISGAA…AAPGQLSAAE (221 aa)) is 3-dehydroquinase. The active-site Proton acceptor; for 3-dehydroquinate dehydratase activity is the H1179. K1207 functions as the Schiff-base intermediate with substrate; for 3-dehydroquinate dehydratase activity in the catalytic mechanism. Positions 1289 to 1590 (PKSFYLFGTP…KMDKHPTFVC (302 aa)) are shikimate dehydrogenase.

In the N-terminal section; belongs to the sugar phosphate cyclases superfamily. Dehydroquinate synthase family. It in the 2nd section; belongs to the EPSP synthase family. This sequence in the 3rd section; belongs to the shikimate kinase family. The protein in the 4th section; belongs to the type-I 3-dehydroquinase family. In the C-terminal section; belongs to the shikimate dehydrogenase family. Homodimer. Zn(2+) is required as a cofactor.

It is found in the cytoplasm. The catalysed reaction is 7-phospho-2-dehydro-3-deoxy-D-arabino-heptonate = 3-dehydroquinate + phosphate. The enzyme catalyses 3-dehydroquinate = 3-dehydroshikimate + H2O. It carries out the reaction shikimate + NADP(+) = 3-dehydroshikimate + NADPH + H(+). It catalyses the reaction shikimate + ATP = 3-phosphoshikimate + ADP + H(+). The catalysed reaction is 3-phosphoshikimate + phosphoenolpyruvate = 5-O-(1-carboxyvinyl)-3-phosphoshikimate + phosphate. The protein operates within metabolic intermediate biosynthesis; chorismate biosynthesis; chorismate from D-erythrose 4-phosphate and phosphoenolpyruvate: step 2/7. It participates in metabolic intermediate biosynthesis; chorismate biosynthesis; chorismate from D-erythrose 4-phosphate and phosphoenolpyruvate: step 3/7. It functions in the pathway metabolic intermediate biosynthesis; chorismate biosynthesis; chorismate from D-erythrose 4-phosphate and phosphoenolpyruvate: step 4/7. Its pathway is metabolic intermediate biosynthesis; chorismate biosynthesis; chorismate from D-erythrose 4-phosphate and phosphoenolpyruvate: step 5/7. The protein operates within metabolic intermediate biosynthesis; chorismate biosynthesis; chorismate from D-erythrose 4-phosphate and phosphoenolpyruvate: step 6/7. The AROM polypeptide catalyzes 5 consecutive enzymatic reactions in prechorismate polyaromatic amino acid biosynthesis. The chain is Pentafunctional AROM polypeptide from Sclerotinia sclerotiorum (White mold).